A 571-amino-acid chain; its full sequence is Proline--tRNA ligase (571 aa).

The protein belongs to the class-II aminoacyl-tRNA synthetase family. ProS type 1 subfamily. In terms of assembly, homodimer.

Its subcellular location is the cytoplasm. It carries out the reaction tRNA(Pro) + L-proline + ATP = L-prolyl-tRNA(Pro) + AMP + diphosphate. Its function is as follows. Catalyzes the attachment of proline to tRNA(Pro) in a two-step reaction: proline is first activated by ATP to form Pro-AMP and then transferred to the acceptor end of tRNA(Pro). As ProRS can inadvertently accommodate and process non-cognate amino acids such as alanine and cysteine, to avoid such errors it has two additional distinct editing activities against alanine. One activity is designated as 'pretransfer' editing and involves the tRNA(Pro)-independent hydrolysis of activated Ala-AMP. The other activity is designated 'posttransfer' editing and involves deacylation of mischarged Ala-tRNA(Pro). The misacylated Cys-tRNA(Pro) is not edited by ProRS. In Psychromonas ingrahamii (strain DSM 17664 / CCUG 51855 / 37), this protein is Proline--tRNA ligase.